A 319-amino-acid polypeptide reads, in one-letter code: D-alanine--D-alanine ligase (319 aa).

A disordered region spans residues Met1–Lys23. Positions Lys120–Glu313 constitute an ATP-grasp domain. Met147 to Thr197 contacts ATP. Residues Asp264, Glu280, and Asn282 each contribute to the Mg(2+) site.

It belongs to the D-alanine--D-alanine ligase family. It depends on Mg(2+) as a cofactor. Requires Mn(2+) as cofactor.

The protein localises to the cytoplasm. The catalysed reaction is 2 D-alanine + ATP = D-alanyl-D-alanine + ADP + phosphate + H(+). It participates in cell wall biogenesis; peptidoglycan biosynthesis. Cell wall formation. This Roseobacter denitrificans (strain ATCC 33942 / OCh 114) (Erythrobacter sp. (strain OCh 114)) protein is D-alanine--D-alanine ligase.